The chain runs to 2715 residues: Cilia- and flagella-associated protein 46 (2715 aa).

TPR repeat units follow at residues 89-122 (CRAQ…AKGE), 175-208 (AELM…IKSH), 261-295 (GDIS…LLFE), 324-359 (PGKL…AQLD), 426-459 (CQVH…DSLG), 469-503 (STRL…TPKD), 807-845 (SRKF…TNGS), 936-969 (LQTL…GIKY), 1111-1144 (AALY…LPRT), and 1174-1211 (AESE…LQKP). Residues 1356–1412 (SHLLLPKKEKENERSKEKEKERSKEKENERSKEKDKEKGKEEKVKEPKQSQSPAPIK) form a disordered region. A compositionally biased stretch (basic and acidic residues) spans 1361 to 1403 (PKKEKENERSKEKEKERSKEKENERSKEKDKEKGKEEKVKEPK). A coiled-coil region spans residues 1362-1401 (KKEKENERSKEKEKERSKEKENERSKEKDKEKGKEEKVKE). The TPR 11 repeat unit spans residues 1639 to 1672 (AQCLLLLAQLANKEKNYGQAKKMIAQAQHLGGSE). The stretch at 1781-1810 (VDVKLERAKIKRLRAQNEKDEEQKTAYYLE) forms a coiled coil. 3 disordered regions span residues 2000–2023 (EEEG…EHCR), 2294–2319 (AVVA…HSTV), and 2371–2399 (ETEG…KGSI). Basic and acidic residues-rich tracts occupy residues 2300–2311 (GKSKGKDKERKT) and 2371–2383 (ETEG…GRSR). The segment covering 2384-2398 (DPKKRSLAKKGRKGS) has biased composition (basic residues). TPR repeat units lie at residues 2399-2432 (IPRT…EMLT) and 2504-2537 (VAVL…EANW). The tract at residues 2541–2567 (ASPSEDEWRRGGEPRRGFSDLEGQAAA) is disordered. The span at 2546–2559 (DEWRRGGEPRRGFS) shows a compositional bias: basic and acidic residues.

It belongs to the CFAP46 family.

The protein resides in the cytoplasm. Its subcellular location is the cytoskeleton. The protein localises to the cilium axoneme. Functionally, as part of the central apparatus of the cilium axoneme plays a role in cilium movement. The sequence is that of Cilia- and flagella-associated protein 46 from Homo sapiens (Human).